Here is an 83-residue protein sequence, read N- to C-terminus: Small ribosomal subunit protein bS16 (83 aa).

Belongs to the bacterial ribosomal protein bS16 family.

This Aromatoleum aromaticum (strain DSM 19018 / LMG 30748 / EbN1) (Azoarcus sp. (strain EbN1)) protein is Small ribosomal subunit protein bS16.